Reading from the N-terminus, the 114-residue chain is Protein S40-2 (114 aa).

The segment at 23-50 (RYTKLYNSRNDEKKGTRRHETAEKTSPV) is disordered. Basic and acidic residues predominate over residues 31 to 45 (RNDEKKGTRRHETAE).

This sequence belongs to the senescence regulator S40 family.

It localises to the cytoplasm. This is Protein S40-2 from Arabidopsis thaliana (Mouse-ear cress).